We begin with the raw amino-acid sequence, 213 residues long: Ribosomal RNA small subunit methyltransferase G (213 aa).

S-adenosyl-L-methionine-binding positions include G75, F80, 128-129, and R144; that span reads IE.

It belongs to the methyltransferase superfamily. RNA methyltransferase RsmG family.

Its subcellular location is the cytoplasm. It catalyses the reaction guanosine(527) in 16S rRNA + S-adenosyl-L-methionine = N(7)-methylguanosine(527) in 16S rRNA + S-adenosyl-L-homocysteine. Specifically methylates the N7 position of guanine in position 527 of 16S rRNA. This Brucella anthropi (strain ATCC 49188 / DSM 6882 / CCUG 24695 / JCM 21032 / LMG 3331 / NBRC 15819 / NCTC 12168 / Alc 37) (Ochrobactrum anthropi) protein is Ribosomal RNA small subunit methyltransferase G.